Consider the following 484-residue polypeptide: Glutelin type-D 1 (484 aa).

An N-terminal signal peptide occupies residues M1–A27. 2 disulfide bridges follow: C38–C71 and C114–C292. 2 consecutive Cupin type-1 domains span residues L43 to K238 and V298 to R447.

This sequence belongs to the 11S seed storage protein (globulins) family. In terms of assembly, hexamer; each subunit is composed of an acidic and a basic chain derived from a single precursor and linked by a disulfide bond.

The protein resides in the protein storage vacuole. Seed storage protein. This chain is Glutelin type-D 1, found in Oryza sativa subsp. japonica (Rice).